A 239-amino-acid polypeptide reads, in one-letter code: Ribosomal RNA small subunit methyltransferase G (239 aa).

S-adenosyl-L-methionine contacts are provided by residues G78, F83, 129–130, and R148; that span reads AE.

The protein belongs to the methyltransferase superfamily. RNA methyltransferase RsmG family.

It localises to the cytoplasm. Its function is as follows. Specifically methylates the N7 position of a guanine in 16S rRNA. The polypeptide is Ribosomal RNA small subunit methyltransferase G (Clostridium tetani (strain Massachusetts / E88)).